The sequence spans 283 residues: Phosphatidylserine decarboxylase proenzyme (283 aa).

Residues Asp-96, His-152, and Ser-250 each act as charge relay system; for autoendoproteolytic cleavage activity in the active site. Ser-250 (schiff-base intermediate with substrate; via pyruvic acid; for decarboxylase activity) is an active-site residue. Position 250 is a pyruvic acid (Ser); by autocatalysis (Ser-250).

The protein belongs to the phosphatidylserine decarboxylase family. PSD-B subfamily. Prokaryotic type I sub-subfamily. Heterodimer of a large membrane-associated beta subunit and a small pyruvoyl-containing alpha subunit. The cofactor is pyruvate. Post-translationally, is synthesized initially as an inactive proenzyme. Formation of the active enzyme involves a self-maturation process in which the active site pyruvoyl group is generated from an internal serine residue via an autocatalytic post-translational modification. Two non-identical subunits are generated from the proenzyme in this reaction, and the pyruvate is formed at the N-terminus of the alpha chain, which is derived from the carboxyl end of the proenzyme. The autoendoproteolytic cleavage occurs by a canonical serine protease mechanism, in which the side chain hydroxyl group of the serine supplies its oxygen atom to form the C-terminus of the beta chain, while the remainder of the serine residue undergoes an oxidative deamination to produce ammonia and the pyruvoyl prosthetic group on the alpha chain. During this reaction, the Ser that is part of the protease active site of the proenzyme becomes the pyruvoyl prosthetic group, which constitutes an essential element of the active site of the mature decarboxylase.

It localises to the cell membrane. The catalysed reaction is a 1,2-diacyl-sn-glycero-3-phospho-L-serine + H(+) = a 1,2-diacyl-sn-glycero-3-phosphoethanolamine + CO2. It participates in phospholipid metabolism; phosphatidylethanolamine biosynthesis; phosphatidylethanolamine from CDP-diacylglycerol: step 2/2. Catalyzes the formation of phosphatidylethanolamine (PtdEtn) from phosphatidylserine (PtdSer). The protein is Phosphatidylserine decarboxylase proenzyme of Acinetobacter baumannii (strain AB0057).